Reading from the N-terminus, the 275-residue chain is Phosphate import ATP-binding protein PstB 1 (275 aa).

The ABC transporter domain occupies 22 to 261; sequence IETRDLSVYY…DRTEKIFNSP (240 aa). 54–61 contacts ATP; the sequence is GPSGCGKS.

The protein belongs to the ABC transporter superfamily. Phosphate importer (TC 3.A.1.7) family. The complex is composed of two ATP-binding proteins (PstB), two transmembrane proteins (PstC and PstA) and a solute-binding protein (PstS).

The protein localises to the cell inner membrane. The enzyme catalyses phosphate(out) + ATP + H2O = ADP + 2 phosphate(in) + H(+). In terms of biological role, part of the ABC transporter complex PstSACB involved in phosphate import. Responsible for energy coupling to the transport system. This is Phosphate import ATP-binding protein PstB 1 from Synechococcus sp. (strain JA-3-3Ab) (Cyanobacteria bacterium Yellowstone A-Prime).